A 441-amino-acid chain; its full sequence is Pre-mRNA-splicing factor PRP46 (441 aa).

2 disordered regions span residues Met-1–Ser-22 and Met-81–Leu-107. Over residues Ala-83–Leu-107 the composition is skewed to polar residues. 7 WD repeats span residues Gly-130–Thr-169, Gly-172–His-211, Gly-214–Val-253, Gly-256–Thr-295, His-298–Asn-336, Asp-339–Gln-379, and Glu-388–Ser-427.

This sequence belongs to the WD repeat PRL1/PRL2 family. Associated with the spliceosome.

The protein resides in the cytoplasm. It localises to the nucleus. Involved in pre-mRNA splicing and required for cell cycle progression at G2/M. This is Pre-mRNA-splicing factor PRP46 (PRP46) from Yarrowia lipolytica (strain CLIB 122 / E 150) (Yeast).